The primary structure comprises 203 residues: Urease accessory protein UreG (203 aa).

GTP is bound at residue 11–18 (GPVGSGKT).

It belongs to the SIMIBI class G3E GTPase family. UreG subfamily. In terms of assembly, homodimer. UreD, UreF and UreG form a complex that acts as a GTP-hydrolysis-dependent molecular chaperone, activating the urease apoprotein by helping to assemble the nickel containing metallocenter of UreC. The UreE protein probably delivers the nickel.

The protein resides in the cytoplasm. In terms of biological role, facilitates the functional incorporation of the urease nickel metallocenter. This process requires GTP hydrolysis, probably effectuated by UreG. The chain is Urease accessory protein UreG from Prochlorococcus marinus (strain AS9601).